A 205-amino-acid polypeptide reads, in one-letter code: MSKRESAKHKIDRRLGENIWGRPKSPVNRREYGPGQHGQRRKGKLSDFGVQLRAKQKLKGFYGDISEKQFRKTYEEAARRKGDTGENLIGLLESRLDAVVYRAKFVPTIFAARQFINHGHVNVNGRRVNIQSYRLKVGDVVEVREKSKQLAIVLEAVQLAERDVPDYIDVDHNKMVATYNRVPGLSDVPYAVQMEPNLVVEFYSR.

The span at 1–16 (MSKRESAKHKIDRRLG) shows a compositional bias: basic and acidic residues. Residues 1-46 (MSKRESAKHKIDRRLGENIWGRPKSPVNRREYGPGQHGQRRKGKLS) form a disordered region. The S4 RNA-binding domain occupies 94 to 157 (SRLDAVVYRA…KQLAIVLEAV (64 aa)).

Belongs to the universal ribosomal protein uS4 family. In terms of assembly, part of the 30S ribosomal subunit. Contacts protein S5. The interaction surface between S4 and S5 is involved in control of translational fidelity.

One of the primary rRNA binding proteins, it binds directly to 16S rRNA where it nucleates assembly of the body of the 30S subunit. Functionally, with S5 and S12 plays an important role in translational accuracy. This chain is Small ribosomal subunit protein uS4, found in Brucella abortus (strain S19).